Consider the following 250-residue polypeptide: 5'-nucleotidase SurE (250 aa).

The a divalent metal cation site is built by Asp8, Asp9, Ser40, and Asn94.

It belongs to the SurE nucleotidase family. The cofactor is a divalent metal cation.

Its subcellular location is the cytoplasm. The catalysed reaction is a ribonucleoside 5'-phosphate + H2O = a ribonucleoside + phosphate. Its function is as follows. Nucleotidase that shows phosphatase activity on nucleoside 5'-monophosphates. This chain is 5'-nucleotidase SurE, found in Wolbachia pipientis wMel.